A 1393-amino-acid polypeptide reads, in one-letter code: DNA-directed RNA polymerase subunit beta' (1393 aa).

Residues C72, C74, C87, and C90 each contribute to the Zn(2+) site. Residues D463, D465, and D467 each contribute to the Mg(2+) site. Zn(2+)-binding residues include C812, C887, C894, and C897.

This sequence belongs to the RNA polymerase beta' chain family. As to quaternary structure, the RNAP catalytic core consists of 2 alpha, 1 beta, 1 beta' and 1 omega subunit. When a sigma factor is associated with the core the holoenzyme is formed, which can initiate transcription. The cofactor is Mg(2+). Requires Zn(2+) as cofactor.

The enzyme catalyses RNA(n) + a ribonucleoside 5'-triphosphate = RNA(n+1) + diphosphate. DNA-dependent RNA polymerase catalyzes the transcription of DNA into RNA using the four ribonucleoside triphosphates as substrates. The protein is DNA-directed RNA polymerase subunit beta' of Chlamydia caviae (strain ATCC VR-813 / DSM 19441 / 03DC25 / GPIC) (Chlamydophila caviae).